Here is a 255-residue protein sequence, read N- to C-terminus: Imidazole glycerol phosphate synthase subunit HisF (255 aa).

Active-site residues include D11 and D130.

This sequence belongs to the HisA/HisF family. In terms of assembly, heterodimer of HisH and HisF.

The protein resides in the cytoplasm. The catalysed reaction is 5-[(5-phospho-1-deoxy-D-ribulos-1-ylimino)methylamino]-1-(5-phospho-beta-D-ribosyl)imidazole-4-carboxamide + L-glutamine = D-erythro-1-(imidazol-4-yl)glycerol 3-phosphate + 5-amino-1-(5-phospho-beta-D-ribosyl)imidazole-4-carboxamide + L-glutamate + H(+). It participates in amino-acid biosynthesis; L-histidine biosynthesis; L-histidine from 5-phospho-alpha-D-ribose 1-diphosphate: step 5/9. Functionally, IGPS catalyzes the conversion of PRFAR and glutamine to IGP, AICAR and glutamate. The HisF subunit catalyzes the cyclization activity that produces IGP and AICAR from PRFAR using the ammonia provided by the HisH subunit. The polypeptide is Imidazole glycerol phosphate synthase subunit HisF (Rhodopseudomonas palustris (strain BisB5)).